The following is a 556-amino-acid chain: Dihydroxy-acid dehydratase (556 aa).

Asp78 contacts Mg(2+). Cys119 is a binding site for [2Fe-2S] cluster. Residues Asp120 and Lys121 each coordinate Mg(2+). N6-carboxylysine is present on Lys121. Cys191 provides a ligand contact to [2Fe-2S] cluster. Glu442 provides a ligand contact to Mg(2+). Ser468 serves as the catalytic Proton acceptor.

This sequence belongs to the IlvD/Edd family. As to quaternary structure, homodimer. It depends on [2Fe-2S] cluster as a cofactor. Requires Mg(2+) as cofactor.

The catalysed reaction is (2R)-2,3-dihydroxy-3-methylbutanoate = 3-methyl-2-oxobutanoate + H2O. It catalyses the reaction (2R,3R)-2,3-dihydroxy-3-methylpentanoate = (S)-3-methyl-2-oxopentanoate + H2O. It participates in amino-acid biosynthesis; L-isoleucine biosynthesis; L-isoleucine from 2-oxobutanoate: step 3/4. Its pathway is amino-acid biosynthesis; L-valine biosynthesis; L-valine from pyruvate: step 3/4. In terms of biological role, functions in the biosynthesis of branched-chain amino acids. Catalyzes the dehydration of (2R,3R)-2,3-dihydroxy-3-methylpentanoate (2,3-dihydroxy-3-methylvalerate) into 2-oxo-3-methylpentanoate (2-oxo-3-methylvalerate) and of (2R)-2,3-dihydroxy-3-methylbutanoate (2,3-dihydroxyisovalerate) into 2-oxo-3-methylbutanoate (2-oxoisovalerate), the penultimate precursor to L-isoleucine and L-valine, respectively. This Clostridium kluyveri (strain NBRC 12016) protein is Dihydroxy-acid dehydratase.